We begin with the raw amino-acid sequence, 134 residues long: Small ribosomal subunit protein uS9c (134 aa).

The protein belongs to the universal ribosomal protein uS9 family.

Its subcellular location is the plastid. The protein localises to the chloroplast. The sequence is that of Small ribosomal subunit protein uS9c (rps9) from Guillardia theta (Cryptophyte).